A 360-amino-acid chain; its full sequence is Phospho-N-acetylmuramoyl-pentapeptide-transferase (360 aa).

Helical transmembrane passes span 26-46 (AIVS…RLIA), 72-92 (PTMG…LWAY), 94-114 (SNPY…VGFV), 132-152 (WKYF…YITG), 168-188 (VMPQ…VGTG), 199-219 (GLAI…AWAT), 236-256 (AGEL…FLWF), 263-283 (VFMG…IAVL), 288-308 (FLLV…ILQV), and 338-358 (VIVR…ATLK).

This sequence belongs to the glycosyltransferase 4 family. MraY subfamily. Mg(2+) is required as a cofactor.

The protein localises to the cell inner membrane. The enzyme catalyses UDP-N-acetyl-alpha-D-muramoyl-L-alanyl-gamma-D-glutamyl-meso-2,6-diaminopimeloyl-D-alanyl-D-alanine + di-trans,octa-cis-undecaprenyl phosphate = di-trans,octa-cis-undecaprenyl diphospho-N-acetyl-alpha-D-muramoyl-L-alanyl-D-glutamyl-meso-2,6-diaminopimeloyl-D-alanyl-D-alanine + UMP. It functions in the pathway cell wall biogenesis; peptidoglycan biosynthesis. Functionally, catalyzes the initial step of the lipid cycle reactions in the biosynthesis of the cell wall peptidoglycan: transfers peptidoglycan precursor phospho-MurNAc-pentapeptide from UDP-MurNAc-pentapeptide onto the lipid carrier undecaprenyl phosphate, yielding undecaprenyl-pyrophosphoryl-MurNAc-pentapeptide, known as lipid I. This chain is Phospho-N-acetylmuramoyl-pentapeptide-transferase, found in Cronobacter sakazakii (strain ATCC BAA-894) (Enterobacter sakazakii).